The following is a 691-amino-acid chain: Pentatricopeptide repeat-containing protein At5g27110 (691 aa).

PPR repeat units follow at residues 38 to 68, 70 to 104, 106 to 140, 141 to 171, 172 to 206, 207 to 241, 242 to 272, 273 to 307, 308 to 342, 343 to 373, 374 to 408, 409 to 443, 444 to 474, 475 to 509, 510 to 540, and 546 to 576; these read DVVL…FDIR, DVYI…SICV, DSFT…GYVC, DVVV…MPER, DVAS…GFEP, NSVS…GFEL, DEYV…MPRK, SLVA…GTRP, SQTT…VVNA, DIYV…TQKD, VAES…GVKP, DVVT…RLET, DELL…IPKK, DVVS…GLKP, DGVT…MRSK, and IIEH…TPET. The segment at 582-657 is type E motif; the sequence is LLSTLFSACC…KPGCSWIEMS (76 aa). The tract at residues 658–688 is type E(+) motif; the sequence is DKVCHFFAEDRSHLRAENVYECLALLSGHME.

The protein belongs to the PPR family. PCMP-E subfamily.

This is Pentatricopeptide repeat-containing protein At5g27110 (PCMP-E14) from Arabidopsis thaliana (Mouse-ear cress).